The following is a 385-amino-acid chain: Serpin-Z1 (385 aa).

Residues 317–341 (GAEAAAATADGDCGCSLDFVEPPKK) are RCL.

Belongs to the serpin family.

Its function is as follows. Probable serine protease inhibitor. This Arabidopsis thaliana (Mouse-ear cress) protein is Serpin-Z1.